The chain runs to 414 residues: Chromobox protein homolog 6 (414 aa).

In terms of domain architecture, Chromo spans 11-69 (FAAESIIKRRIRKGRIEYLVKWKGWAIKYSTWEPEENILDSRLIAAFEQKERERELYGP). Ser107 carries the post-translational modification Phosphoserine. 3 disordered regions span residues 127–152 (HRMS…PISP), 267–308 (APFD…VPNW), and 344–365 (ALEP…PEMS). A compositionally biased stretch (low complexity) spans 267-287 (APFDAHSSSSSGCPSPTLQSS).

As to quaternary structure, component of a PRC1-like complex. Distinct PRC1-like core complexes are composed of a RING1 subunit (RING1B or RING1A), one of the six PCGF proteins (PCGF1-6), one PHC protein (PHC1-3) and one of the CBX proteins (CBX2, CBX4, CBX6, CBX7 or CBX8). Interacts with PCGF1, PCGF2, PCGF3, BMI1, PCGF5, PCGF6, RING1 and RNF2. May interact with H3C15 and H3C1. Interacts (via chromodomain) with single-stranded RNA (ssRNA). Post-translationally, ubiquitinated. Ubiquitination regulates the function of the Polycomb group (PcG) multiprotein PRC1-like complex. Deubiquitinated by USP26. Expressed in mouse embryonic stem cells.

It localises to the nucleus. Its subcellular location is the chromosome. Functionally, component of a Polycomb group (PcG) multiprotein PRC1-like complex, a complex class required to maintain the transcriptionally repressive state of many genes, including Hox genes, throughout development. PcG PRC1 complex acts via chromatin remodeling and modification of histones; it mediates monoubiquitination of histone H2A 'Lys-119', rendering chromatin heritably changed in its expressibility. Possibly contributes to the target selectivity of the PRC1 complex by binding specific regions of chromatin. Recruitment to chromatin might occur in an H3K27me3-independent fashion. May have a PRC1-independent function in embryonic stem cells. This is Chromobox protein homolog 6 (Cbx6) from Mus musculus (Mouse).